The following is a 472-amino-acid chain: L-aspartate oxidase (472 aa).

FAD-binding positions include 7-10, Ser29, 36-37, 42-43, and Asp191; these read SGIA, ST, and GG. Arg257 serves as the catalytic Proton donor/acceptor. FAD-binding positions include Glu337 and 353-354; that span reads SL.

It belongs to the FAD-dependent oxidoreductase 2 family. NadB subfamily. In terms of assembly, monomer. It depends on FAD as a cofactor.

It is found in the cytoplasm. It catalyses the reaction L-aspartate + O2 = iminosuccinate + H2O2. It participates in cofactor biosynthesis; NAD(+) biosynthesis; iminoaspartate from L-aspartate (oxidase route): step 1/1. Functionally, catalyzes the oxidation of L-aspartate to iminoaspartate, the first step in the de novo biosynthesis of NAD(+). Can also use L-asparagine, but not L-phenylalanine, L-glutamate, glycine, L-proline, L-alanine and D-aspartate. The protein is L-aspartate oxidase of Sulfurisphaera tokodaii (strain DSM 16993 / JCM 10545 / NBRC 100140 / 7) (Sulfolobus tokodaii).